The chain runs to 268 residues: 1,4-dihydroxy-2-naphthoyl-CoA synthase (268 aa).

Residues 30–31, 70–74, 114–118, S140, and S146 each bind substrate; these read VL, VGGDQ, and YAVGG. Residue 139-141 participates in hydrogencarbonate binding; the sequence is QSG.

It belongs to the enoyl-CoA hydratase/isomerase family. MenB subfamily. Hydrogencarbonate serves as cofactor.

It localises to the plastid. The protein resides in the chloroplast. The catalysed reaction is 2-succinylbenzoyl-CoA + H(+) = 1,4-dihydroxy-2-naphthoyl-CoA + H2O. The protein operates within quinol/quinone metabolism; 1,4-dihydroxy-2-naphthoate biosynthesis; 1,4-dihydroxy-2-naphthoate from chorismate: step 6/7. It functions in the pathway quinol/quinone metabolism; menaquinone biosynthesis. Its function is as follows. Converts o-succinylbenzoyl-CoA (OSB-CoA) to 1,4-dihydroxy-2-naphthoyl-CoA (DHNA-CoA). The polypeptide is 1,4-dihydroxy-2-naphthoyl-CoA synthase (menB) (Cyanidium caldarium (Red alga)).